The primary structure comprises 307 residues: Leucine-rich repeat-containing protein 25 (307 aa).

Residues 1–20 (MGGPLMWALLLPLLLHQAGS) form the signal peptide. The Extracellular portion of the chain corresponds to 21–168 (QTSSCSVLSG…SCPSGLTKIA (148 aa)). Asn-44 and Asn-56 each carry an N-linked (GlcNAc...) asparagine glycan. LRR repeat units follow at residues 63–86 (SVQL…RDLE) and 87–110 (QLQL…XXGC). 3 N-linked (GlcNAc...) asparagine glycosylation sites follow: Asn-95, Asn-132, and Asn-151. A helical transmembrane segment spans residues 169 to 189 (IGALAASGSLLLVLAIAGPVL). Over 190–307 (AWRFCRHRMD…DDEEYVVPGR (118 aa)) the chain is Cytoplasmic. The tract at residues 205–249 (TWASQDGSRSGSGRQPRYSSQGRRPKSPANTPPRSSTPDYENVFV) is disordered. The segment covering 211–226 (GSRSGSGRQPRYSSQG) has biased composition (low complexity). The span at 232–243 (PANTPPRSSTPD) shows a compositional bias: polar residues. A Phosphotyrosine modification is found at Tyr-286.

In terms of assembly, interacts with RIGI. Interacts with SQSTM1. Interacts with p65/RELA; this interaction promotes the degradation of RELA through autophagy.

It localises to the membrane. It is found in the cytoplasm. Its function is as follows. Plays a role in the inhibition of RLR-mediated type I interferon signaling pathway by targeting RIGI for autophagic degradation. Interacts specifically with ISG15-associated RIGI to promote interaction between RIGI and the autophagic cargo receptor p62/SQSTM1 to mediate RIGI degradation via selective autophagy. Plays also a role in the inhibition of NF-kappa-B signaling pathway and inflammatory response by promoting the degradation of p65/RELA. This is Leucine-rich repeat-containing protein 25 (LRRC25) from Bos taurus (Bovine).